We begin with the raw amino-acid sequence, 250 residues long: 1-(5-phosphoribosyl)-5-[(5-phosphoribosylamino)methylideneamino] imidazole-4-carboxamide isomerase (250 aa).

Residue Asp8 is the Proton acceptor of the active site. The active-site Proton donor is the Asp131.

It belongs to the HisA/HisF family.

The protein localises to the cytoplasm. It catalyses the reaction 1-(5-phospho-beta-D-ribosyl)-5-[(5-phospho-beta-D-ribosylamino)methylideneamino]imidazole-4-carboxamide = 5-[(5-phospho-1-deoxy-D-ribulos-1-ylimino)methylamino]-1-(5-phospho-beta-D-ribosyl)imidazole-4-carboxamide. It functions in the pathway amino-acid biosynthesis; L-histidine biosynthesis; L-histidine from 5-phospho-alpha-D-ribose 1-diphosphate: step 4/9. This chain is 1-(5-phosphoribosyl)-5-[(5-phosphoribosylamino)methylideneamino] imidazole-4-carboxamide isomerase, found in Paraburkholderia phytofirmans (strain DSM 17436 / LMG 22146 / PsJN) (Burkholderia phytofirmans).